We begin with the raw amino-acid sequence, 414 residues long: Gamma-glutamyl phosphate reductase (414 aa).

It belongs to the gamma-glutamyl phosphate reductase family.

The protein localises to the cytoplasm. It carries out the reaction L-glutamate 5-semialdehyde + phosphate + NADP(+) = L-glutamyl 5-phosphate + NADPH + H(+). The protein operates within amino-acid biosynthesis; L-proline biosynthesis; L-glutamate 5-semialdehyde from L-glutamate: step 2/2. Catalyzes the NADPH-dependent reduction of L-glutamate 5-phosphate into L-glutamate 5-semialdehyde and phosphate. The product spontaneously undergoes cyclization to form 1-pyrroline-5-carboxylate. This Clostridium botulinum (strain Alaska E43 / Type E3) protein is Gamma-glutamyl phosphate reductase.